The following is a 245-amino-acid chain: 1-(5-phosphoribosyl)-5-[(5-phosphoribosylamino)methylideneamino] imidazole-4-carboxamide isomerase (245 aa).

Asp8 (proton acceptor) is an active-site residue. Asp130 acts as the Proton donor in catalysis.

It belongs to the HisA/HisF family.

Its subcellular location is the cytoplasm. It carries out the reaction 1-(5-phospho-beta-D-ribosyl)-5-[(5-phospho-beta-D-ribosylamino)methylideneamino]imidazole-4-carboxamide = 5-[(5-phospho-1-deoxy-D-ribulos-1-ylimino)methylamino]-1-(5-phospho-beta-D-ribosyl)imidazole-4-carboxamide. The protein operates within amino-acid biosynthesis; L-histidine biosynthesis; L-histidine from 5-phospho-alpha-D-ribose 1-diphosphate: step 4/9. In Azotobacter vinelandii (strain DJ / ATCC BAA-1303), this protein is 1-(5-phosphoribosyl)-5-[(5-phosphoribosylamino)methylideneamino] imidazole-4-carboxamide isomerase.